A 595-amino-acid polypeptide reads, in one-letter code: Leiomodin-1 (595 aa).

Disordered stretches follow at residues 1–322 (MSKV…KVKN) and 467–568 (DKQR…QEKN). Ser-12 carries the post-translational modification Phosphoserine. Acidic residues predominate over residues 27 to 40 (EEMEELEKELDVVD). 8 stretches are compositionally biased toward basic and acidic residues: residues 72–105 (CEKE…EDKG), 117–127 (QDSDVGKEPKK), 134–193 (FSRD…EKTG), 201–224 (SRDK…KLTA), 232–251 (RQED…KPEV), 259–289 (RDSR…REKQ), 467–476 (DKQRQKRLQE), and 484–493 (SGEKKDRLEV). Ser-85 is modified (phosphoserine). Ser-135 is modified (phosphoserine). 8 repeat units span residues 165–180 (AAVD…REER), 181–196 (AAAT…GSVR), 197–212 (NAGL…EEVK), 213–227 (EPSK…AENR), 228–243 (STVG…ESRE), 244–257 (DRDK…IGCG), 258–273 (SRDS…KEET), and 274–288 (QPDK…TREK). The tract at residues 165 to 288 (AAVDRKEAGK…VREEGKTREK (124 aa)) is 8 X approximate tandem repeats. 2 stretches are compositionally biased toward pro residues: residues 503 to 513 (SPKPSPQPSPK) and 527 to 538 (AAPPPPPPPLAP). Positions 503–522 (SPKPSPQPSPKSAPKNSPKK) are 5 X 4 AA approximate tandem repeats. Ser-550 carries the post-translational modification Phosphoserine. Positions 569 to 588 (SRDQLLAAIRSSNLKQLKKV) constitute a WH2 domain.

As to expression, detected in smooth muscle, in stomach and uterus, blood vessel wall, and in slow fibers in extraocular muscle, urinary bladder and sternothyroid muscle (at protein level).

The protein localises to the cytoplasm. The protein resides in the myofibril. It is found in the sarcomere. It localises to the cytoskeleton. Functionally, required for proper contractility of visceral smooth muscle cells. Mediates nucleation of actin filaments. The chain is Leiomodin-1 from Rattus norvegicus (Rat).